The sequence spans 394 residues: Elongation factor Tu (394 aa).

Residues 10–204 (KPHVNIGTIG…AVDSYIPQPV (195 aa)) enclose the tr-type G domain. The G1 stretch occupies residues 19-26 (GHVDHGKT). GTP is bound at residue 19 to 26 (GHVDHGKT). Residue threonine 26 participates in Mg(2+) binding. A G2 region spans residues 60 to 64 (GITIS). The interval 81 to 84 (DCPG) is G3. Residues 81–85 (DCPGH) and 136–139 (NKVD) contribute to the GTP site. Residues 136 to 139 (NKVD) are G4. A G5 region spans residues 174–176 (SAL).

It belongs to the TRAFAC class translation factor GTPase superfamily. Classic translation factor GTPase family. EF-Tu/EF-1A subfamily. Monomer.

It is found in the cytoplasm. The enzyme catalyses GTP + H2O = GDP + phosphate + H(+). In terms of biological role, GTP hydrolase that promotes the GTP-dependent binding of aminoacyl-tRNA to the A-site of ribosomes during protein biosynthesis. The polypeptide is Elongation factor Tu (Rickettsia helvetica).